Reading from the N-terminus, the 180-residue chain is Isopentenyl-diphosphate Delta-isomerase (180 aa).

Mn(2+) contacts are provided by His22 and His28. The Nudix hydrolase domain occupies 26 to 160 (LKHKAVSVFA…PERFTPWLKI (135 aa)). Cys62 is a catalytic residue. Cys62 serves as a coordination point for Mg(2+). Mn(2+) is bound at residue His64. Glu82 is a binding site for Mg(2+). 2 residues coordinate Mn(2+): Glu108 and Glu110. Glu110 is a catalytic residue.

It belongs to the IPP isomerase type 1 family. Mg(2+) is required as a cofactor. Requires Mn(2+) as cofactor.

Its subcellular location is the cytoplasm. The enzyme catalyses isopentenyl diphosphate = dimethylallyl diphosphate. Its pathway is isoprenoid biosynthesis; dimethylallyl diphosphate biosynthesis; dimethylallyl diphosphate from isopentenyl diphosphate: step 1/1. Catalyzes the 1,3-allylic rearrangement of the homoallylic substrate isopentenyl (IPP) to its highly electrophilic allylic isomer, dimethylallyl diphosphate (DMAPP). The protein is Isopentenyl-diphosphate Delta-isomerase of Ruegeria pomeroyi (strain ATCC 700808 / DSM 15171 / DSS-3) (Silicibacter pomeroyi).